The primary structure comprises 327 residues: Methionyl-tRNA formyltransferase (327 aa).

Residue 121-124 (SLLP) coordinates (6S)-5,6,7,8-tetrahydrofolate.

This sequence belongs to the Fmt family.

The catalysed reaction is L-methionyl-tRNA(fMet) + (6R)-10-formyltetrahydrofolate = N-formyl-L-methionyl-tRNA(fMet) + (6S)-5,6,7,8-tetrahydrofolate + H(+). In terms of biological role, attaches a formyl group to the free amino group of methionyl-tRNA(fMet). The formyl group appears to play a dual role in the initiator identity of N-formylmethionyl-tRNA by promoting its recognition by IF2 and preventing the misappropriation of this tRNA by the elongation apparatus. This is Methionyl-tRNA formyltransferase from Burkholderia pseudomallei (strain K96243).